Here is an 835-residue protein sequence, read N- to C-terminus: Telomere length regulation protein TEL2 homolog (835 aa).

Disordered stretches follow at residues 455–501 and 629–648; these read SADC…LAPY and LSHE…HSIR. Over residues 464–473 the composition is skewed to low complexity; the sequence is ESSPSKSCPK. The segment covering 474–486 has biased composition (basic and acidic residues); the sequence is AIEKSKMEAKADQ. The segment covering 488–499 has biased composition (acidic residues); the sequence is SDSELDSDDDLA. Residues 636–648 show a composition bias toward polar residues; it reads ESRSTGTGQHSIR.

It belongs to the TEL2 family.

It is found in the cytoplasm. Its subcellular location is the membrane. It localises to the nucleus. The protein localises to the chromosome. The protein resides in the telomere. Its function is as follows. Regulator of the DNA damage response (DDR). Part of the TTT complex that is required to stabilize protein levels of the phosphatidylinositol 3-kinase-related protein kinase (PIKK) family proteins. Promotes assembly, stabilizes and maintains the activity of TORC complexes, which regulate cell growth and survival in response to nutrient and hormonal signals. May be involved in telomere length regulation. The protein is Telomere length regulation protein TEL2 homolog (telo2) of Xenopus laevis (African clawed frog).